An 836-amino-acid chain; its full sequence is Protein O-mannosyl-transferase TMTC2 (836 aa).

A helical membrane pass occupies residues 1–21 (MIAELVSSALGLALYLNTLSA). The Extracellular portion of the chain corresponds to 22-84 (DFCYDDSRAI…LNHAIGGLNP (63 aa)). The chain crosses the membrane as a helical span at residues 85-105 (WSYHLVNVLLHAAVTGLFTSF). The Cytoplasmic portion of the chain corresponds to 106–107 (SK). Residues 108 to 128 (ILLGDGYWTFMAGLMFASHPI) traverse the membrane as a helical segment. Residues 129 to 132 (HTEA) are Extracellular-facing. Residues 133-153 (VAGIVGRADVGASLFFLLSLL) form a helical membrane-spanning segment. Over 154–162 (CYIKHCSTR) the chain is Cytoplasmic. The next 2 helical transmembrane spans lie at 163-184 (GYSARTWGWFLGSGLCAGCSML) and 185-204 (WKEQGVTVLAVSAVYDVFVF). Residues 205-220 (HRLKIKQILPTIYKRK) lie on the Cytoplasmic side of the membrane. Residues 221–241 (NLSLFLSISLLIFWGSSLLGA) traverse the membrane as a helical segment. Over 242 to 312 (RLYWMGNKPP…KTVCDWRNLH (71 aa)) the chain is Extracellular. A helical membrane pass occupies residues 313 to 333 (TVAFYTGLLLLAYYGLKSPSV). The Cytoplasmic portion of the chain corresponds to 334–399 (DRECNGKTVT…TENIVVLSLS (66 aa)). A helical membrane pass occupies residues 400 to 420 (LLIIPFVPATNLFFYVGFVIA). Over 421-422 (ER) the chain is Extracellular. The chain crosses the membrane as a helical span at residues 423-443 (VLYIPSMGFCLLITVGARALY). Residues 444–449 (VKVQKR) lie on the Cytoplasmic side of the membrane. Residues 450 to 470 (FLKSLIFYATATLIVFYGLKT) form a helical membrane-spanning segment. Residues 471-836 (AIRNGDWQNE…EKQGLKTSKT (366 aa)) lie on the Extracellular side of the membrane. TPR repeat units lie at residues 493–526 (AKAWGNLGNVLKSQSKISEAESAYRNALYYRSNM), 527–560 (ADMLYNLGLLLQENSRFAEALHYYKLAIGSRPTL), 561–594 (ASAYLNTGIILMNQGRTEEARRTFLKCSEIPDEN), 606–639 (TSCLYNLGKLYHEQGHYEEALSVYKEAIQKMPRQ), 643–676 (QSLYNMMGEAYMRLSKLPEAEHWYMESLRSKTDH), 677–710 (IPAHLTYGKLLALTGRKSEAEKLFLKAIELDPTK), 711–744 (GNCYMHYGQFLLEEARLIEAAEMAKKAAELDSTE), 745–778 (FDVVFNAAHMLRQASLNEAAEKYYDLAARLRPNY), and 779–812 (PAALMNLGAILHLNGRLQKAEANYLRALQLKPDD).

This sequence belongs to the TMTC family.

The protein localises to the membrane. The protein resides in the endoplasmic reticulum. The catalysed reaction is a di-trans,poly-cis-dolichyl beta-D-mannosyl phosphate + L-seryl-[protein] = 3-O-(alpha-D-mannosyl)-L-seryl-[protein] + a di-trans,poly-cis-dolichyl phosphate + H(+). It carries out the reaction a di-trans,poly-cis-dolichyl beta-D-mannosyl phosphate + L-threonyl-[protein] = 3-O-(alpha-D-mannosyl)-L-threonyl-[protein] + a di-trans,poly-cis-dolichyl phosphate + H(+). It functions in the pathway protein modification; protein glycosylation. Transfers mannosyl residues to the hydroxyl group of serine or threonine residues. The 4 members of the TMTC family are O-mannosyl-transferases dedicated primarily to the cadherin superfamily, each member seems to have a distinct role in decorating the cadherin domains with O-linked mannose glycans at specific regions. Also acts as O-mannosyl-transferase on other proteins such as PDIA3. This chain is Protein O-mannosyl-transferase TMTC2, found in Homo sapiens (Human).